The following is a 185-amino-acid chain: MISVNDFKTGLTIEVDNGIWRVLDFQHVKPGKGAAFVRSKLRNLRTGAIQEKTFRGGEKVAKAQIDNRKMAYLYADGTNHVFMDNESYEQIELPEDQIAHELKFLKENMEINIIMYQGETIGIDLPNTVELVVTATDPGIKGDTSSGGSKPATLETGLVVQVPFFVNEGDKLVINTTEAAYVSRA.

Belongs to the elongation factor P family.

Its subcellular location is the cytoplasm. The protein operates within protein biosynthesis; polypeptide chain elongation. Its function is as follows. Involved in peptide bond synthesis. Stimulates efficient translation and peptide-bond synthesis on native or reconstituted 70S ribosomes in vitro. Probably functions indirectly by altering the affinity of the ribosome for aminoacyl-tRNA, thus increasing their reactivity as acceptors for peptidyl transferase. This Listeria innocua serovar 6a (strain ATCC BAA-680 / CLIP 11262) protein is Elongation factor P.